A 471-amino-acid polypeptide reads, in one-letter code: Glutamate--tRNA ligase (471 aa).

Positions 9–19 (PSPTGYLHVGG) match the 'HIGH' region motif. Zn(2+) contacts are provided by Cys98, Cys100, Cys125, and His127. Positions 237-241 (KLSKR) match the 'KMSKS' region motif. Lys240 is an ATP binding site.

This sequence belongs to the class-I aminoacyl-tRNA synthetase family. Glutamate--tRNA ligase type 1 subfamily. As to quaternary structure, monomer. Requires Zn(2+) as cofactor.

It localises to the cytoplasm. It carries out the reaction tRNA(Glu) + L-glutamate + ATP = L-glutamyl-tRNA(Glu) + AMP + diphosphate. In terms of biological role, catalyzes the attachment of glutamate to tRNA(Glu) in a two-step reaction: glutamate is first activated by ATP to form Glu-AMP and then transferred to the acceptor end of tRNA(Glu). The chain is Glutamate--tRNA ligase from Salmonella enteritidis PT4 (strain P125109).